Here is a 707-residue protein sequence, read N- to C-terminus: Phosphoprotein (707 aa).

The N0 binding stretch occupies residues 1-35; sequence MDKLDLVNDGLDIIDFIQKNQKEIQKTYGRSSIQQ. Disordered regions lie at residues 26–103, 193–229, 254–446, and 454–473; these read KTYG…EDPD, FVPK…PRGN, FAKS…AENV, and VTRN…SLDD. Composition is skewed to polar residues over residues 28-37 and 77-96; these read YGRSSIQQPS and DLSS…SNTR. Ser-257 is subject to Phosphoserine; by host. Positions 296-317 are enriched in basic and acidic residues; sequence FPEKEETPDVRRKDSLMQDSCK. Phosphoserine; by host is present on Ser-350. Residues 435-446 show a composition bias toward polar residues; that stretch reads NQESKSVTAENV. Residues 473–578 form a multimerization region; that stretch reads DKYIMPSDDF…LVSMMIMIPG (106 aa).

In terms of assembly, homotetramer. Interacts (via multimerization domain) with polymerase L; this interaction forms the polymerase L-P complex. Interacts (via N-terminus) with N0 (via Ncore); this interaction allows P to chaperon N0 to avoid N polymerization before encapsidation. Interacts (via C-terminus) with N-RNA template; this interaction positions the polymerase on the template for both transcription and replication.

In terms of biological role, essential cofactor of the RNA polymerase L that plays a central role in the transcription and replication by forming the polymerase complex with RNA polymerase L and recruiting L to the genomic N-RNA template for RNA synthesis. Also plays a central role in the encapsidation of nascent RNA chains by forming the encapsidation complex with the nucleocapsid protein N (N-P complex). Acts as a chaperone for newly synthesized free N protein, so-called N0, allowing encapsidation of nascent RNA chains during replication. The nucleoprotein protein N prevents excessive phosphorylation of P, which leads to down-regulation of viral transcription/ replication. Participates, together with N, in the formation of viral factories (viroplasms), which are large inclusions in the host cytoplasm where replication takes place. In Equus caballus (Horse), this protein is Phosphoprotein (P/V/C).